The following is a 406-amino-acid chain: O-glycosyltransferase PaGT (406 aa).

The tract at residues 1–26 (MSPPSQIKPPQGTTPVPPSELDPRSD) is disordered.

It belongs to the afumC glycosyltransferase family.

The protein operates within mycotoxin biosynthesis. In terms of biological role, O-glycosyltransferase; part of the 2 gene clusters that mediate the biosynthesis of fusicoccins, diterpene glucosides that display phytohormone-like activity and function as potent activators of plasma membrane H(+)-ATPases in plants by modifying 14-3-3 proteins and cause the plant disease constriction canker. The first step in the pathway is performed by the fusicoccadiene synthase PaFS that possesses both prenyl transferase and terpene cyclase activity, converting isopentenyl diphosphate and dimethylallyl diphosphate into geranylgeranyl diphosphate (GGDP) and successively converting GGDP into fusicocca-2,10(14)-diene, a precursor for fusicoccin H. The second step is the oxidation at the C-8 position by the cytochrome P450 monooxygenase PaP450-2 to yield fusicocca-2,10(14)-diene-8-beta-ol. The cytochrome P450 monooxygenase PaP450-1 then catalyzes the hydroxylation at the C-16 position to produce fusicocca-2,10(14)-diene-8-beta,16-diol. The dioxygenase fc-dox then catalyzes the 16-oxydation of fusicocca-2,10(14)-diene-8-beta,16-diol to yield an aldehyde (8-beta-hydroxyfusicocca-1,10(14)-dien-16-al). The short-chain dehydrogenase/reductase fc-sdr catalyzes the reduction of the aldehyde to yield fusicocca-1,10(14)-diene-8-beta,16-diol. The next step is the hydroxylation at C-9 performed by the cytochrome P450 monooxygenase PaP450-3 that leads to fusicoccin H aglycon which is glycosylated to fusicoccin H by the O-glycosyltransferase PaGT. Hydroxylation at C-12 by the cytochrome P450 monooxygenase PaP450-4 leads then to the production of fusicoccin Q and is followed by methylation by the O-methyltransferase PaMT to yield fusicoccin P. Fusicoccin P is further converted to fusicoccin J via prenylation by the O-glucose prenyltransferase PaPT. Cytochrome P450 monooxygenase PaP450-5 then performs hydroxylation at C-19 to yield dideacetyl-fusicoccin A which is acetylated to 3'-O-deacetyl-fusicoccin A by the O-acetyltransferase PaAT-2. Finally, a another acetylation by the O-acetyltransferase PaAT-1 yields fusicoccin A. The protein is O-glycosyltransferase PaGT of Phomopsis amygdali (Fusicoccum amygdali).